The sequence spans 231 residues: MKQYNDLFKIIHREGYIFIASFALVSFLLASFNEKLGCIGCIATAWCIYFFRNPDRFVPISDDLVISPADGIIQEIKEALPPPELGLGDVEMIRVSIFLNIFNVHVNRIPANGKILALHYNPGKFFNASLDKASIYNERQSVLMETAQGQKIVFVQIAGLIARRIVCDLEEGNEVKTGERYGIIRFGSRVDVYLPLKTALLVSKGQTAIGGETIIADFGRKKTTEFKFERK.

The active-site Schiff-base intermediate with substrate; via pyruvic acid is the S188. Position 188 is a pyruvic acid (Ser); by autocatalysis (S188).

This sequence belongs to the phosphatidylserine decarboxylase family. PSD-A subfamily. Heterodimer of a large membrane-associated beta subunit and a small pyruvoyl-containing alpha subunit. Pyruvate serves as cofactor. Is synthesized initially as an inactive proenzyme. Formation of the active enzyme involves a self-maturation process in which the active site pyruvoyl group is generated from an internal serine residue via an autocatalytic post-translational modification. Two non-identical subunits are generated from the proenzyme in this reaction, and the pyruvate is formed at the N-terminus of the alpha chain, which is derived from the carboxyl end of the proenzyme. The post-translation cleavage follows an unusual pathway, termed non-hydrolytic serinolysis, in which the side chain hydroxyl group of the serine supplies its oxygen atom to form the C-terminus of the beta chain, while the remainder of the serine residue undergoes an oxidative deamination to produce ammonia and the pyruvoyl prosthetic group on the alpha chain.

It localises to the cell membrane. It catalyses the reaction a 1,2-diacyl-sn-glycero-3-phospho-L-serine + H(+) = a 1,2-diacyl-sn-glycero-3-phosphoethanolamine + CO2. It participates in phospholipid metabolism; phosphatidylethanolamine biosynthesis; phosphatidylethanolamine from CDP-diacylglycerol: step 2/2. Its function is as follows. Catalyzes the formation of phosphatidylethanolamine (PtdEtn) from phosphatidylserine (PtdSer). This is Phosphatidylserine decarboxylase proenzyme from Rickettsia africae (strain ESF-5).